The chain runs to 579 residues: Nuclear receptor coactivator 5 (579 aa).

Methionine 1 carries the post-translational modification N-acetylmethionine. Residues 1–78 (MNTAPSRPSP…LRDHRDSRSV (78 aa)) are disordered. The transcription repression stretch occupies residues 1–158 (MNTAPSRPSP…RDSFDGRGPP (158 aa)). The residue at position 3 (threonine 3) is a Phosphothreonine. 5 positions are modified to phosphoserine: serine 9, serine 21, serine 24, serine 29, and serine 34. Basic and acidic residues-rich tracts occupy residues 11–62 (TRRD…DLRD) and 68–78 (DLRDHRDSRSV). 5 positions are modified to phosphoserine: serine 96, serine 116, serine 126, serine 143, and serine 151. The segment at 148–173 (YRDSFDGRGPPGPESQSRAKERLKRE) is disordered. Over residues 164–173 (SRAKERLKRE) the composition is skewed to basic and acidic residues. The residue at position 274 (threonine 274) is a Phosphothreonine. Positions 345 to 349 (LINLL) match the LXXLL motif motif. Disordered stretches follow at residues 375 to 428 (MRSS…PTSQ), 444 to 537 (VTAN…NFDN), and 560 to 579 (QTTAQMGQPQAPMGSYQRHY). Position 378 is a phosphoserine (serine 378). Threonine 379 carries the post-translational modification Phosphothreonine. Serine 381 is subject to Phosphoserine. Polar residues predominate over residues 395–413 (SGASLKTQPSSQPLQSGQV). Positions 446–457 (ANSSSASPSVAA) are enriched in low complexity. Residues 458–579 (GNTPNQNFST…APMGSYQRHY (122 aa)) form a transcription activation region. 2 stretches are compositionally biased toward polar residues: residues 459-485 (NTPNQNFSTAANSQPQQRSQASGNQPP) and 520-537 (SNMTSQRPVSSTGINFDN).

In terms of assembly, binds HTATIP2/TIP30. Interacts with YLPM1. Forms a complex with ILF2, ILF3, YLPM1, KHDRBS1, RBMX and PPP1CA. As to expression, widely expressed.

It is found in the nucleus. In terms of biological role, nuclear receptor coregulator that can have both coactivator and corepressor functions. Interacts with nuclear receptors for steroids (ESR1 and ESR2) independently of the steroid binding domain (AF-2) of the ESR receptors, and with the orphan nuclear receptor NR1D2. Involved in the coactivation of nuclear steroid receptors (ER) as well as the corepression of MYC in response to 17-beta-estradiol (E2). In Homo sapiens (Human), this protein is Nuclear receptor coactivator 5 (NCOA5).